A 592-amino-acid chain; its full sequence is Coronatine-insensitive protein 1 (592 aa).

Residues 16-57 (TVDDVIEQVMTYITDPKDRDSASLVCRRWFKIDSETREHVTM) form the F-box domain. LRR repeat units follow at residues 58–82 (ALCYTATPDRLSRRFPNLRSLKLKG), 83–102 (KPRAAMFNLIPENWGGYVTP), 103–120 (WVTEISNNLRQLKSVHFR), 121–154 (RMIVSDLDLDRLAKARADDLETLKLDKCSGFTTD), 155–182 (GLLSIVTHCRKIKTLLMEESSFSEKDGK), 183–210 (WLHELAQHNTSLEVLNFYMTEFAKISPK), 211–236 (DLETIARNCRSLVSVKVGDFEILELV), 237–264 (GFFKAAANLEEFCGGSLNEDIGMPEKYM), 265–283 (NLVFPRKLCRLGLSYMGPN), 284–308 (EMPILFPFAAQIRKLDLLYALLETE), 309–332 (DHCTLIQKCPNLEVLETRNVIGDR), 333–368 (GLEVLAQYCKQLKRLRIERGADEQGMEDEEGLVSQR), 369–393 (GLIALAQGCQELEYMAVYVSDITNE), 394–426 (SLESIGTYLKNLCDFRLVLLDREERITDLPLDN), 427–456 (GVRSLLIGCKKLRRFAFYLRQGGLTDLGLS), 457–478 (YIGQYSPNVRWMLLGYVGESDE), 479–500 (GLMEFSRGCPNLQKLEMRGCCF), and 501–524 (SERAIAAAVTKLPSLRYLWVQGYR). A jasmonate-binding site is contributed by R85. Jasmonate-binding residues include R348, Y386, and R409. R496 is a binding site for jasmonate.

Component of SCF(COI1) E3 ubiquitin ligase complexes at least composed of ASK1 or ASK2, CUL1, RBX1A or RBX1B and COI1. Interacts with ASK1 and ASK2, but separately. Also binds to ASK11 and ASK12. Interacts with RBCS-1B and HDA6. SCF complexes interact with the COP9 signalosome (CSN). Interacts with TIFY10A.

It functions in the pathway protein modification; protein ubiquitination. Its function is as follows. Required for jasmonate-regulated plant fertility and defense processes, and for coronatine and/or other elicitors perceptions/responses. Seems to not be required for meiosis. Required for the regulation of some genes induced by wounding, but not for all. Component of SCF(COI1) E3 ubiquitin ligase complexes, which may mediate the ubiquitination and subsequent proteasomal degradation of target proteins (probably including the ribulose bisphosphate carboxylase small chain 1B RBCS-1B and the histone deacetylase HDA6). These SCF complexes play crucial roles in regulating response to jasmonate, and their interactions with the COP9 signalosome (CSN) appear to be important for their activity. Interacts with TIFY10A and inositol pentakisphosphate to form a high-affinity jasmonates coreceptor. Involved in the regulation of plant gene expression during plant-pathogen interactions with Pseudomonas syringae and Alternaria brassicicola. This Arabidopsis thaliana (Mouse-ear cress) protein is Coronatine-insensitive protein 1 (COI1).